Consider the following 336-residue polypeptide: Holliday junction branch migration complex subunit RuvB (336 aa).

A large ATPase domain (RuvB-L) region spans residues 4-184 (ADRIISAIAK…FGIVQRLEFY (181 aa)). Residues Ile23, Arg24, Gly65, Lys68, Thr69, Thr70, 131–133 (EDY), Arg174, Tyr184, and Arg221 each bind ATP. A Mg(2+)-binding site is contributed by Thr69. Residues 185 to 255 (SIEDLTSIVM…IAKAALAMLD (71 aa)) form a small ATPAse domain (RuvB-S) region. The tract at residues 258–336 (QAGFDYLDRK…HFGLAKLADK (79 aa)) is head domain (RuvB-H). Residues Arg294, Arg313, and Arg318 each contribute to the DNA site.

It belongs to the RuvB family. In terms of assembly, homohexamer. Forms an RuvA(8)-RuvB(12)-Holliday junction (HJ) complex. HJ DNA is sandwiched between 2 RuvA tetramers; dsDNA enters through RuvA and exits via RuvB. An RuvB hexamer assembles on each DNA strand where it exits the tetramer. Each RuvB hexamer is contacted by two RuvA subunits (via domain III) on 2 adjacent RuvB subunits; this complex drives branch migration. In the full resolvosome a probable DNA-RuvA(4)-RuvB(12)-RuvC(2) complex forms which resolves the HJ.

The protein resides in the cytoplasm. It catalyses the reaction ATP + H2O = ADP + phosphate + H(+). The RuvA-RuvB-RuvC complex processes Holliday junction (HJ) DNA during genetic recombination and DNA repair, while the RuvA-RuvB complex plays an important role in the rescue of blocked DNA replication forks via replication fork reversal (RFR). RuvA specifically binds to HJ cruciform DNA, conferring on it an open structure. The RuvB hexamer acts as an ATP-dependent pump, pulling dsDNA into and through the RuvAB complex. RuvB forms 2 homohexamers on either side of HJ DNA bound by 1 or 2 RuvA tetramers; 4 subunits per hexamer contact DNA at a time. Coordinated motions by a converter formed by DNA-disengaged RuvB subunits stimulates ATP hydrolysis and nucleotide exchange. Immobilization of the converter enables RuvB to convert the ATP-contained energy into a lever motion, pulling 2 nucleotides of DNA out of the RuvA tetramer per ATP hydrolyzed, thus driving DNA branch migration. The RuvB motors rotate together with the DNA substrate, which together with the progressing nucleotide cycle form the mechanistic basis for DNA recombination by continuous HJ branch migration. Branch migration allows RuvC to scan DNA until it finds its consensus sequence, where it cleaves and resolves cruciform DNA. The protein is Holliday junction branch migration complex subunit RuvB of Actinobacillus succinogenes (strain ATCC 55618 / DSM 22257 / CCUG 43843 / 130Z).